Reading from the N-terminus, the 111-residue chain is Large ribosomal subunit protein uL22 (111 aa).

It belongs to the universal ribosomal protein uL22 family. In terms of assembly, part of the 50S ribosomal subunit.

Its function is as follows. This protein binds specifically to 23S rRNA; its binding is stimulated by other ribosomal proteins, e.g. L4, L17, and L20. It is important during the early stages of 50S assembly. It makes multiple contacts with different domains of the 23S rRNA in the assembled 50S subunit and ribosome. In terms of biological role, the globular domain of the protein is located near the polypeptide exit tunnel on the outside of the subunit, while an extended beta-hairpin is found that lines the wall of the exit tunnel in the center of the 70S ribosome. This chain is Large ribosomal subunit protein uL22, found in Fusobacterium nucleatum subsp. nucleatum (strain ATCC 25586 / DSM 15643 / BCRC 10681 / CIP 101130 / JCM 8532 / KCTC 2640 / LMG 13131 / VPI 4355).